We begin with the raw amino-acid sequence, 287 residues long: Probable 18S rRNA (guanine-N(7))-methyltransferase (287 aa).

Residues 214–287 (GVEGEEYEQQ…FSGRKRGPKF (74 aa)) are disordered. A compositionally biased stretch (acidic residues) spans 217–228 (GEEYEQQEEEDS). The segment covering 234–245 (SNRKRDRRRVTK) has biased composition (basic residues). Residues 253 to 278 (KTKEWIMNKKDRQRKQGREIKNDSKF) show a composition bias toward basic and acidic residues.

The protein belongs to the class I-like SAM-binding methyltransferase superfamily. BUD23/WBSCR22 family.

The protein localises to the nucleus. The protein resides in the nucleoplasm. Its subcellular location is the cytoplasm. It localises to the perinuclear region. It catalyses the reaction a guanosine in 18S rRNA + S-adenosyl-L-methionine = an N(7)-methylguanosine in 18S rRNA + S-adenosyl-L-homocysteine. S-adenosyl-L-methionine-dependent methyltransferase that specifically methylates the N(7) position of a guanine in 18S rRNA. Important for biogenesis end export of the 40S ribosomal subunit independent on its methyltransferase activity. Functionally, S-adenosyl-L-methionine-dependent methyltransferase that specifically methylates the N(7) position of a guanine in 18S rRNA. Requires the methyltransferase adapter protein TRM112 for full rRNA methyltransferase activity. Involved in the pre-rRNA processing steps leading to small-subunit rRNA production independently of its RNA-modifying catalytic activity. Important for biogenesis end export of the 40S ribosomal subunit independent on its methyltransferase activity. The polypeptide is Probable 18S rRNA (guanine-N(7))-methyltransferase (Dictyostelium discoideum (Social amoeba)).